Here is a 154-residue protein sequence, read N- to C-terminus: Large ribosomal subunit protein bL17 (154 aa).

The segment at 125 to 154 (AASQKSSKQDRAKRVQGSKKNVDAVAESAE) is disordered.

The protein belongs to the bacterial ribosomal protein bL17 family. Part of the 50S ribosomal subunit. Contacts protein L32.

In Chlorobium chlorochromatii (strain CaD3), this protein is Large ribosomal subunit protein bL17.